Consider the following 296-residue polypeptide: (+)-neomenthol dehydrogenase (296 aa).

16–40 serves as a coordination point for NADP(+); sequence RGIGFEICRQLASEGIRVVLTSRDE. Ser-164 lines the substrate pocket. Tyr-220 serves as the catalytic Proton acceptor.

Belongs to the short-chain dehydrogenases/reductases (SDR) family. As to quaternary structure, monomer.

The protein localises to the cytoplasm. The catalysed reaction is (+)-neomenthol + NADP(+) = (1R,4S)-menthone + NADPH + H(+). Aldehyde reductase that catalyzes the reduction of the aldehyde carbonyl groups on saturated and alpha,beta-unsaturated aldehydes with more than 5 carbons. Involved in basal resistance against pathogens. This Arabidopsis thaliana (Mouse-ear cress) protein is (+)-neomenthol dehydrogenase (SDR1).